The primary structure comprises 319 residues: DNA-directed RNA polymerase subunit alpha (319 aa).

The segment at 1 to 227 (MKEFIFPMKI…KHMNMLTNIS (227 aa)) is alpha N-terminal domain (alpha-NTD). The alpha C-terminal domain (alpha-CTD) stretch occupies residues 242 to 319 (LMEKLTFSIE…NIGEQRSSEV (78 aa)).

Belongs to the RNA polymerase alpha chain family. As to quaternary structure, homodimer. The RNAP catalytic core consists of 2 alpha, 1 beta, 1 beta' and 1 omega subunit. When a sigma factor is associated with the core the holoenzyme is formed, which can initiate transcription.

The catalysed reaction is RNA(n) + a ribonucleoside 5'-triphosphate = RNA(n+1) + diphosphate. DNA-dependent RNA polymerase catalyzes the transcription of DNA into RNA using the four ribonucleoside triphosphates as substrates. The polypeptide is DNA-directed RNA polymerase subunit alpha (Hydrogenobaculum sp. (strain Y04AAS1)).